We begin with the raw amino-acid sequence, 641 residues long: Chaperone protein DnaK (641 aa).

Threonine 199 carries the phosphothreonine; by autocatalysis modification. Residues 603-627 are disordered; that stretch reads YGQQQAEGGAQAAGAAGGSSKADDA. A compositionally biased stretch (low complexity) spans 604–616; that stretch reads GQQQAEGGAQAAG.

Belongs to the heat shock protein 70 family.

Acts as a chaperone. This is Chaperone protein DnaK from Azoarcus sp. (strain BH72).